Here is a 406-residue protein sequence, read N- to C-terminus: UPF0754 membrane protein CYA_0973 (406 aa).

Helical transmembrane passes span 1–21 and 385–405; these read MALW…YFTN and IVNL…LFLL.

Belongs to the UPF0754 family.

The protein localises to the cell inner membrane. The chain is UPF0754 membrane protein CYA_0973 from Synechococcus sp. (strain JA-3-3Ab) (Cyanobacteria bacterium Yellowstone A-Prime).